The chain runs to 117 residues: Large ribosomal subunit protein bL20 (117 aa).

The protein belongs to the bacterial ribosomal protein bL20 family.

In terms of biological role, binds directly to 23S ribosomal RNA and is necessary for the in vitro assembly process of the 50S ribosomal subunit. It is not involved in the protein synthesizing functions of that subunit. The protein is Large ribosomal subunit protein bL20 of Mesomycoplasma hyopneumoniae (strain 232) (Mycoplasma hyopneumoniae).